The following is an 86-amino-acid chain: Putative defensin-like protein 9 (86 aa).

The N-terminal stretch at Met-1–Gly-29 is a signal peptide. Gln-30 carries the pyrrolidone carboxylic acid modification. 4 cysteine pairs are disulfide-bonded: Cys-34–Cys-79, Cys-45–Cys-65, Cys-51–Cys-73, and Cys-55–Cys-75.

Belongs to the DEFL family.

The protein resides in the secreted. The chain is Putative defensin-like protein 9 (LCR76) from Arabidopsis thaliana (Mouse-ear cress).